We begin with the raw amino-acid sequence, 407 residues long: Protein NIS1 (407 aa).

The segment covering 40–61 (TSNSNSNSNSNSNTNSNTNSNS) has biased composition (low complexity). 2 disordered regions span residues 40–64 (TSNS…SDTK) and 251–315 (RSIR…KLNT). Residues Ser260 and Ser264 each carry the phosphoserine modification. The segment covering 266 to 276 (PTTTPATATKT) has biased composition (low complexity). Polar residues predominate over residues 277–302 (IKQNSTTPTTRSVYNKNVGRSNTSPS). 2 positions are modified to phosphoserine: Ser300 and Ser302. The span at 306-315 (HPKRRGKLNT) shows a compositional bias: basic residues. The SUMO-binding signature appears at 391 to 398 (IIIPDSQD).

As to quaternary structure, interacts with CBF2, GIS1, NAP1, PRM8, REI1, SHS1 and SMT3.

It localises to the bud neck. The protein localises to the cytoplasm. The protein resides in the cell cortex. In terms of biological role, may be involved in a mitotic signaling network. Binds sumoylated proteins and may stabilize SUMO chains. The sequence is that of Protein NIS1 (NIS1) from Saccharomyces cerevisiae (strain YJM789) (Baker's yeast).